The primary structure comprises 115 residues: Large ribosomal subunit protein bL20 (115 aa).

It belongs to the bacterial ribosomal protein bL20 family.

Functionally, binds directly to 23S ribosomal RNA and is necessary for the in vitro assembly process of the 50S ribosomal subunit. It is not involved in the protein synthesizing functions of that subunit. In Salinibacter ruber (strain DSM 13855 / M31), this protein is Large ribosomal subunit protein bL20.